Consider the following 557-residue polypeptide: Dihydroxy-acid dehydratase (557 aa).

Cys-50 provides a ligand contact to [2Fe-2S] cluster. Mg(2+) is bound at residue Asp-82. Cys-123 is a [2Fe-2S] cluster binding site. Mg(2+) contacts are provided by Asp-124 and Lys-125. Lys-125 bears the N6-carboxylysine mark. Residue Cys-195 participates in [2Fe-2S] cluster binding. A Mg(2+)-binding site is contributed by Glu-447. The active-site Proton acceptor is the Ser-473.

This sequence belongs to the IlvD/Edd family. As to quaternary structure, homodimer. The cofactor is [2Fe-2S] cluster. Mg(2+) serves as cofactor.

It carries out the reaction (2R)-2,3-dihydroxy-3-methylbutanoate = 3-methyl-2-oxobutanoate + H2O. It catalyses the reaction (2R,3R)-2,3-dihydroxy-3-methylpentanoate = (S)-3-methyl-2-oxopentanoate + H2O. Its pathway is amino-acid biosynthesis; L-isoleucine biosynthesis; L-isoleucine from 2-oxobutanoate: step 3/4. It participates in amino-acid biosynthesis; L-valine biosynthesis; L-valine from pyruvate: step 3/4. Functionally, functions in the biosynthesis of branched-chain amino acids. Catalyzes the dehydration of (2R,3R)-2,3-dihydroxy-3-methylpentanoate (2,3-dihydroxy-3-methylvalerate) into 2-oxo-3-methylpentanoate (2-oxo-3-methylvalerate) and of (2R)-2,3-dihydroxy-3-methylbutanoate (2,3-dihydroxyisovalerate) into 2-oxo-3-methylbutanoate (2-oxoisovalerate), the penultimate precursor to L-isoleucine and L-valine, respectively. This chain is Dihydroxy-acid dehydratase, found in Burkholderia mallei (strain NCTC 10247).